The primary structure comprises 50 residues: Parvalbumin (50 aa).

In terms of domain architecture, EF-hand spans 38 to 50 (KTHEQVKKVFNIL).

Belongs to the parvalbumin family.

Its function is as follows. Probably regulates the activity of the caudal neurosecretory system. Binds two calcium ions. This Scyliorhinus canicula (Small-spotted catshark) protein is Parvalbumin.